The chain runs to 231 residues: Large ribosomal subunit protein uL1 (231 aa).

Belongs to the universal ribosomal protein uL1 family. As to quaternary structure, part of the 50S ribosomal subunit.

Functionally, binds directly to 23S rRNA. The L1 stalk is quite mobile in the ribosome, and is involved in E site tRNA release. Protein L1 is also a translational repressor protein, it controls the translation of the L11 operon by binding to its mRNA. This chain is Large ribosomal subunit protein uL1, found in Francisella tularensis subsp. tularensis (strain FSC 198).